A 182-amino-acid chain; its full sequence is ATP-dependent protease subunit HslV (182 aa).

T6 is a catalytic residue. A164, C167, and T170 together coordinate Na(+).

Belongs to the peptidase T1B family. HslV subfamily. A double ring-shaped homohexamer of HslV is capped on each side by a ring-shaped HslU homohexamer. The assembly of the HslU/HslV complex is dependent on binding of ATP.

It localises to the cytoplasm. It carries out the reaction ATP-dependent cleavage of peptide bonds with broad specificity.. Allosterically activated by HslU binding. Functionally, protease subunit of a proteasome-like degradation complex believed to be a general protein degrading machinery. This Borrelia garinii subsp. bavariensis (strain ATCC BAA-2496 / DSM 23469 / PBi) (Borreliella bavariensis) protein is ATP-dependent protease subunit HslV.